Consider the following 206-residue polypeptide: Small ribosomal subunit protein uS4 (206 aa).

An S4 RNA-binding domain is found at 96 to 156; sequence GRLDNVVYRM…EKAKKQSRVK (61 aa).

The protein belongs to the universal ribosomal protein uS4 family. Part of the 30S ribosomal subunit. Contacts protein S5. The interaction surface between S4 and S5 is involved in control of translational fidelity.

Functionally, one of the primary rRNA binding proteins, it binds directly to 16S rRNA where it nucleates assembly of the body of the 30S subunit. With S5 and S12 plays an important role in translational accuracy. The sequence is that of Small ribosomal subunit protein uS4 from Serratia proteamaculans (strain 568).